The sequence spans 429 residues: Tyrosine-protein kinase STYK1 (429 aa).

The chain crosses the membrane as a helical span at residues 30–50 (VIIVPALLVGGFLILLAIILW). A disordered region spans residues 58–83 (SQRQSPGPRGTASVPASRGRSQEAAG). Residues 119–390 (LEVLEQIHSG…GQLLQRLEAA (272 aa)) enclose the Protein kinase domain. ATP is bound by residues 125–133 (IHSGSCGTL) and lysine 152. Aspartate 256 (proton acceptor) is an active-site residue.

The protein belongs to the protein kinase superfamily. Tyr protein kinase family. As to expression, highly expressed in colon and small intestine. Weakly or not expressed in spleen, skeletal muscle, liver, kidney, heart and brain. Expressed in transformed kidney cell lines (COS-1 and HEK293T).

The protein localises to the membrane. The catalysed reaction is L-tyrosyl-[protein] + ATP = O-phospho-L-tyrosyl-[protein] + ADP + H(+). In terms of biological role, probable tyrosine protein-kinase, which has strong transforming capabilities on a variety of cell lines including NIH 3T3 fibroblasts and on athymic nude mice. When overexpressed, it can also induce tumor cell invasion as well as metastasis in distant organs. May act by activating both MAP kinase and phosphatidylinositol 3'-kinases (PI3K) pathways. This is Tyrosine-protein kinase STYK1 (Styk1) from Mus musculus (Mouse).